The sequence spans 443 residues: Ribulose bisphosphate carboxylase large chain (443 aa).

The substrate site is built by asparagine 89 and threonine 139. The Proton acceptor role is filled by lysine 141. Residue lysine 143 coordinates substrate. Mg(2+) is bound by residues lysine 167, aspartate 169, and glutamate 170. N6-carboxylysine is present on lysine 167. The active-site Proton acceptor is the histidine 260. Positions 261, 293, and 345 each coordinate substrate.

This sequence belongs to the RuBisCO large chain family. Type I subfamily. Heterohexadecamer of 8 large chains and 8 small chains; disulfide-linked. The disulfide link is formed within the large subunit homodimers. Requires Mg(2+) as cofactor. The disulfide bond which can form in the large chain dimeric partners within the hexadecamer appears to be associated with oxidative stress and protein turnover.

Its subcellular location is the plastid. The protein localises to the chloroplast. It catalyses the reaction 2 (2R)-3-phosphoglycerate + 2 H(+) = D-ribulose 1,5-bisphosphate + CO2 + H2O. The catalysed reaction is D-ribulose 1,5-bisphosphate + O2 = 2-phosphoglycolate + (2R)-3-phosphoglycerate + 2 H(+). RuBisCO catalyzes two reactions: the carboxylation of D-ribulose 1,5-bisphosphate, the primary event in carbon dioxide fixation, as well as the oxidative fragmentation of the pentose substrate in the photorespiration process. Both reactions occur simultaneously and in competition at the same active site. The polypeptide is Ribulose bisphosphate carboxylase large chain (Callitriche heterophylla (Large water-starwort)).